The following is a 510-amino-acid chain: DAP3-binding cell death enhancer 1 (510 aa).

A mitochondrion-targeting transit peptide spans 1–23; that stretch reads MWRLTGILGRALPRLLGPGFRGI. Disordered stretches follow at residues 19–61 and 142–185; these read GFRG…SRDP and VLPR…SGLL. A propeptide spans 24–101 (extended MTS); sequence TPKPTSSDGS…AVLALHLARQ (78 aa). Residues 35–45 show a composition bias toward low complexity; sequence TTSPTLPLTRL. 2 stretches are compositionally biased toward basic and acidic residues: residues 46 to 61 and 155 to 167; these read SFDR…SRDP and GLRE…EDHP. A compositionally biased stretch (polar residues) spans 169–181; it reads APSQCLPSDSSLR. 7 TPR repeats span residues 213–245, 246–278, 279–313, 314–351, 352–385, 386–423, and 471–499; these read AHPP…QLSV, AITF…RGYS, KAQY…VQGH, SLAQ…DSGL, TEAQ…SNGD, SQSR…GNEP, and ASST…TIPS. An SIFI-degron motif is present at residues 307–326; sequence LAAVQGHSLAQYRYARCLLQ.

The protein belongs to the DELE1 family. In terms of assembly, interacts with DAP3. Interacts (via TPR repeats) with EIF2AK1/HRI; activating the protein kinase activity of EIF2AK1/HRI, thereby promoting the integrated stress response (ISR). As to quaternary structure, homooctamer; oligomerization is required to activate EIF2AK1/HRI. Interacts (via TPR repeats) with EIF2AK1/HRI; activating the protein kinase activity of EIF2AK1/HRI, thereby promoting the integrated stress response (ISR). Post-translationally, unstable protein in absence of stress: imported in the mitochondrial matrix following processing by the mitochondrial-processing peptidase (MPP), where it is degraded by LONP1. Stabilized in response to iron deficiency: iron deficiency impairs mitochondrial import, promoting localization at the mitochondrial surface and stabilization. Cleaved by OMA1 in response to mitochondrial stress, generating the DAP3-binding cell death enhancer 1 short form (DELE1(S) or S-DELE1) that accumulates in the cytosol and activates the protein kinase activity of EIF2AK1/HRI. Protein cleavage by OMA1 can take place at different positions, and apparently does not require a specific sequence motif. Ubiquitinated and degraded by the SIFI complex once the mitochondrial stress has been resolved, thereby providing stress response silencing. Within the SIFI complex, UBR4 initiates ubiquitin chain that are further elongated or branched by KCMF1.

The protein localises to the mitochondrion. It localises to the mitochondrion outer membrane. Its subcellular location is the mitochondrion inner membrane. It is found in the cytoplasm. The protein resides in the cytosol. In terms of biological role, protein kinase activator that acts as a key activator of the integrated stress response (ISR) following various stresses, such as iron deficiency, mitochondrial stress or mitochondrial DNA breaks. Detects impaired protein import and processing in mitochondria, activating the ISR. May also required for the induction of death receptor-mediated apoptosis through the regulation of caspase activation. Its function is as follows. Protein kinase activator that activates the ISR in response to iron deficiency: iron deficiency impairs mitochondrial import, promoting DELE1 localization at the mitochondrial surface, where it binds and activates EIF2AK1/HRI to trigger the ISR. Protein kinase activator generated by protein cleavage in response to mitochondrial stress, which accumulates in the cytosol and specifically binds to and activates the protein kinase activity of EIF2AK1/HRI. It thereby activates the integrated stress response (ISR): EIF2AK1/HRI activation promotes eIF-2-alpha (EIF2S1) phosphorylation, leading to a decrease in global protein synthesis and the induction of selected genes, including the transcription factor ATF4, the master transcriptional regulator of the ISR. Also acts as an activator of PRKN-independent mitophagy: activates the protein kinase activity of EIF2AK1/HRI in response to mitochondrial damage, promoting eIF-2-alpha (EIF2S1) phosphorylation, leading to mitochondrial localization of EIF2S1 followed by induction of mitophagy. This Mus musculus (Mouse) protein is DAP3-binding cell death enhancer 1.